The chain runs to 907 residues: Lateral signaling target protein 2 homolog (907 aa).

Disordered regions lie at residues 339–395 (SSDN…DPAN), 463–604 (LTDS…SGDA), 662–688 (NSSPPEPEDPPEPAANSTDKPKEPDPA), 716–756 (EVNA…SENG), and 770–834 (GSGG…EERR). Positions 351-361 (DISSFYTSNNR) are enriched in polar residues. Residues 367–393 (EPNEDDDVSESNDEDEDEGEEVDEDDP) show a composition bias toward acidic residues. Composition is skewed to polar residues over residues 463-475 (LTDSGLGTANPSL) and 486-495 (PVTSSHPIAQ). The segment covering 501-516 (SEEEGEVDEYDEDDSE) has biased composition (acidic residues). The segment covering 525–549 (HHTKHQRRHRHHHHHHRKHYSKHRS) has biased composition (basic residues). Residues 550–565 (SAAGSAGTSGTTCSAA) show a composition bias toward low complexity. Residues 568-580 (QISSCDTSPSSGG) show a composition bias toward polar residues. Residues 592–602 (GSSGNSSGGSG) show a composition bias toward gly residues. Positions 742-751 (APRTMMTTAA) are enriched in polar residues. Residues 777 to 793 (GSSRSSQERSVSLSETS) show a composition bias toward low complexity. Residues 816–826 (PKSVQSEQSGQ) are compositionally biased toward polar residues. The FYVE-type zinc finger occupies 845–905 (DGDAPRCMAC…VCRECFVREV (61 aa)). The Zn(2+) site is built by Cys-851, Cys-854, Cys-867, Cys-870, Cys-875, Cys-878, Cys-897, and Cys-900.

It belongs to the lst-2 family.

Its function is as follows. Negative regulator of epidermal growth factor receptor (EGFR) signaling. This chain is Lateral signaling target protein 2 homolog, found in Culex quinquefasciatus (Southern house mosquito).